The chain runs to 54 residues: Ovomucoid (54 aa).

One can recognise a Kazal-like domain in the interval 4-54; the sequence is VDCSDYPTHGCTLELKPICGSDNQTYSNKCGFCNAVAQSNGTLTLSHFGKC. Cystine bridges form between Cys-6/Cys-36, Cys-14/Cys-33, and Cys-22/Cys-54. N-linked (GlcNAc...) asparagine glycosylation is present at Asn-43.

It localises to the secreted. The polypeptide is Ovomucoid (Aepypodius arfakianus (Wattled brush turkey)).